The primary structure comprises 146 residues: Cyanate hydratase (146 aa).

Catalysis depends on residues arginine 87, glutamate 90, and serine 113.

Belongs to the cyanase family.

It catalyses the reaction cyanate + hydrogencarbonate + 3 H(+) = NH4(+) + 2 CO2. Its function is as follows. Catalyzes the reaction of cyanate with bicarbonate to produce ammonia and carbon dioxide. This Marinomonas sp. (strain MWYL1) protein is Cyanate hydratase.